A 159-amino-acid polypeptide reads, in one-letter code: Phosphopantetheine adenylyltransferase (159 aa).

Substrate is bound at residue Thr-10. Residues 10 to 11 (TF) and His-18 each bind ATP. Substrate-binding residues include Lys-42, Met-74, and Arg-88. ATP is bound by residues 89-91 (GLR), Glu-99, and 124-130 (WSFISSS).

This sequence belongs to the bacterial CoaD family. In terms of assembly, homohexamer. The cofactor is Mg(2+).

The protein localises to the cytoplasm. It catalyses the reaction (R)-4'-phosphopantetheine + ATP + H(+) = 3'-dephospho-CoA + diphosphate. Its pathway is cofactor biosynthesis; coenzyme A biosynthesis; CoA from (R)-pantothenate: step 4/5. Functionally, reversibly transfers an adenylyl group from ATP to 4'-phosphopantetheine, yielding dephospho-CoA (dPCoA) and pyrophosphate. The sequence is that of Phosphopantetheine adenylyltransferase from Enterobacter sp. (strain 638).